The sequence spans 151 residues: Transcriptional regulator MraZ (151 aa).

SpoVT-AbrB domains lie at 5–52 and 81–124; these read ANAV…PLDE and AVDL…DEDA.

Belongs to the MraZ family. In terms of assembly, forms oligomers.

The protein resides in the cytoplasm. The protein localises to the nucleoid. The polypeptide is Transcriptional regulator MraZ (Pseudomonas putida (strain W619)).